The following is a 907-amino-acid chain: Protein translocase subunit SecA (907 aa).

ATP-binding positions include glutamine 87, 105 to 109 (GEGKT), and aspartate 510. Zn(2+) is bound by residues cysteine 892, cysteine 894, cysteine 903, and histidine 904.

Belongs to the SecA family. In terms of assembly, monomer and homodimer. Part of the essential Sec protein translocation apparatus which comprises SecA, SecYEG and auxiliary proteins SecDF-YajC and YidC. The cofactor is Zn(2+).

The protein localises to the cell inner membrane. It localises to the cytoplasm. It carries out the reaction ATP + H2O + cellular proteinSide 1 = ADP + phosphate + cellular proteinSide 2.. Functionally, part of the Sec protein translocase complex. Interacts with the SecYEG preprotein conducting channel. Has a central role in coupling the hydrolysis of ATP to the transfer of proteins into and across the cell membrane, serving both as a receptor for the preprotein-SecB complex and as an ATP-driven molecular motor driving the stepwise translocation of polypeptide chains across the membrane. This is Protein translocase subunit SecA from Acinetobacter baumannii (strain AB0057).